The following is a 417-amino-acid chain: Serine hydroxymethyltransferase 2 (417 aa).

Residues leucine 121 and 125-127 (GHL) each bind (6S)-5,6,7,8-tetrahydrofolate. Lysine 230 bears the N6-(pyridoxal phosphate)lysine mark. 355 to 357 (SPF) contributes to the (6S)-5,6,7,8-tetrahydrofolate binding site.

The protein belongs to the SHMT family. In terms of assembly, homodimer. It depends on pyridoxal 5'-phosphate as a cofactor.

It localises to the cytoplasm. It catalyses the reaction (6R)-5,10-methylene-5,6,7,8-tetrahydrofolate + glycine + H2O = (6S)-5,6,7,8-tetrahydrofolate + L-serine. Its pathway is one-carbon metabolism; tetrahydrofolate interconversion. The protein operates within amino-acid biosynthesis; glycine biosynthesis; glycine from L-serine: step 1/1. Its function is as follows. Catalyzes the reversible interconversion of serine and glycine with tetrahydrofolate (THF) serving as the one-carbon carrier. This reaction serves as the major source of one-carbon groups required for the biosynthesis of purines, thymidylate, methionine, and other important biomolecules. Also exhibits THF-independent aldolase activity toward beta-hydroxyamino acids, producing glycine and aldehydes, via a retro-aldol mechanism. The polypeptide is Serine hydroxymethyltransferase 2 (Colwellia psychrerythraea (strain 34H / ATCC BAA-681) (Vibrio psychroerythus)).